The primary structure comprises 212 residues: Thiamine-phosphate synthase (212 aa).

4-amino-2-methyl-5-(diphosphooxymethyl)pyrimidine is bound by residues 40–44 (QFREK) and N75. Positions 76 and 95 each coordinate Mg(2+). S113 lines the 4-amino-2-methyl-5-(diphosphooxymethyl)pyrimidine pocket. A 2-[(2R,5Z)-2-carboxy-4-methylthiazol-5(2H)-ylidene]ethyl phosphate-binding site is contributed by 139–141 (TSS). A 4-amino-2-methyl-5-(diphosphooxymethyl)pyrimidine-binding site is contributed by K142. 2-[(2R,5Z)-2-carboxy-4-methylthiazol-5(2H)-ylidene]ethyl phosphate is bound by residues G171 and 191-192 (IS).

Belongs to the thiamine-phosphate synthase family. Mg(2+) is required as a cofactor.

The catalysed reaction is 2-[(2R,5Z)-2-carboxy-4-methylthiazol-5(2H)-ylidene]ethyl phosphate + 4-amino-2-methyl-5-(diphosphooxymethyl)pyrimidine + 2 H(+) = thiamine phosphate + CO2 + diphosphate. It carries out the reaction 2-(2-carboxy-4-methylthiazol-5-yl)ethyl phosphate + 4-amino-2-methyl-5-(diphosphooxymethyl)pyrimidine + 2 H(+) = thiamine phosphate + CO2 + diphosphate. It catalyses the reaction 4-methyl-5-(2-phosphooxyethyl)-thiazole + 4-amino-2-methyl-5-(diphosphooxymethyl)pyrimidine + H(+) = thiamine phosphate + diphosphate. It participates in cofactor biosynthesis; thiamine diphosphate biosynthesis; thiamine phosphate from 4-amino-2-methyl-5-diphosphomethylpyrimidine and 4-methyl-5-(2-phosphoethyl)-thiazole: step 1/1. In terms of biological role, condenses 4-methyl-5-(beta-hydroxyethyl)thiazole monophosphate (THZ-P) and 2-methyl-4-amino-5-hydroxymethyl pyrimidine pyrophosphate (HMP-PP) to form thiamine monophosphate (TMP). In Staphylococcus epidermidis (strain ATCC 35984 / DSM 28319 / BCRC 17069 / CCUG 31568 / BM 3577 / RP62A), this protein is Thiamine-phosphate synthase.